The chain runs to 313 residues: MADSVSMERLVTDLKLQVYSGEAHLKEKIVTLSDISRPGLELTGYFNYYPYERIQLFGMTEVSFTQNMTAEERLMIMRRMASENTPCFLISRSLEPPKEMLQAAEESGIPVLGSNLSTTRLSSLVTDYLDGQLAERRSMHGVLVDIYGLGVLITGDSGVGKSETALELVKRGHRLIADDRVDVYQQDERTVVGEAPMILRHLLEIRGIGIIDVMNLFGAGAVRADTSISLIVHLQNWSQDKKYDRLGSDTEEQMIFDVPVPKITVPVKVGRNLAIIIEVAAMNFRAKSMGYDATKTFEANLGKLIESNSDDEN.

Residues His140 and Lys161 contribute to the active site. 155-162 (GDSGVGKS) provides a ligand contact to ATP. Ser162 provides a ligand contact to Mg(2+). Asp179 (proton acceptor; for phosphorylation activity. Proton donor; for dephosphorylation activity) is an active-site residue. An important for the catalytic mechanism of both phosphorylation and dephosphorylation region spans residues 203–212 (LEIRGIGIID). A Mg(2+)-binding site is contributed by Glu204. The active site involves Arg245. An important for the catalytic mechanism of dephosphorylation region spans residues 266 to 271 (PVKVGR).

This sequence belongs to the HPrK/P family. Homohexamer. It depends on Mg(2+) as a cofactor.

The enzyme catalyses [HPr protein]-L-serine + ATP = [HPr protein]-O-phospho-L-serine + ADP + H(+). The catalysed reaction is [HPr protein]-O-phospho-L-serine + phosphate + H(+) = [HPr protein]-L-serine + diphosphate. Catalyzes the ATP- as well as the pyrophosphate-dependent phosphorylation of a specific serine residue in HPr, a phosphocarrier protein of the phosphoenolpyruvate-dependent sugar phosphotransferase system (PTS). HprK/P also catalyzes the pyrophosphate-producing, inorganic phosphate-dependent dephosphorylation (phosphorolysis) of seryl-phosphorylated HPr (P-Ser-HPr). The two antagonistic activities of HprK/P are regulated by several intracellular metabolites, which change their concentration in response to the absence or presence of rapidly metabolisable carbon sources (glucose, fructose, etc.) in the growth medium. Therefore, by controlling the phosphorylation state of HPr, HPrK/P is a sensor enzyme that plays a major role in the regulation of carbon metabolism and sugar transport: it mediates carbon catabolite repression (CCR), and regulates PTS-catalyzed carbohydrate uptake and inducer exclusion. This Latilactobacillus sakei subsp. sakei (strain 23K) (Lactobacillus sakei subsp. sakei) protein is HPr kinase/phosphorylase.